The following is a 671-amino-acid chain: MGQVHLHNRSFNKATSAGFLIALGIVYGDIGTSPLYAMQAIVRGQGGLANLSESFILGAVSLVIWTLTLITTVKYVLIALKADNHHEGGIFSLFTLVRRMRKWLIIPAMIGGATLLADGALTPAVTVTSAIEGLRGVTHVYSNQTAVMVTTLIILAFLFLIQRFGASLVGRLFGPIMFIWFGFLGVSGLINSFLDLSILKAINPYYAIHLLFSPENKAGFFILGSIFLVTTGAEALYSDLGHVGRGNIYVSWPFVKICIILSYCGQGAWLLAHRGEHIEKLNPFFAVLPDNMVIYVVILSTLAAIIASQALISGSFTLVSEAIRLKLLPLFKIYYPGQTLGQLYIPAVNFALWVTTSFFVLYFKTSEHMEAAYSLAITITMLMTTTLLTYFLIQKGTPKIAIAIISIGLFCIEGSFFAASLVQFINGAYIVVLIALAIIFVMFIWNKSHKIVMKYIKSLNINEYKNQLNALRHDESYDLYQTNVVYLTSKMDHEWIDRSILYSILDKRPKRAECYWFVNVKVTDEPYTSEYKVDMMDTDFIVRVNLYLGFRMRQEVPRYLRTIVTDLMESGRLPRQHQHYSITPGRKVGDFRFVVVEEKLMNARQMPGFERFVLQTKAQIKRITASPIRWFGLQFSEVTVETVPLVLSDVRNLEIHERLEQVDEAEASATH.

Helical transmembrane passes span 18–38 (GFLI…LYAM), 60–80 (VSLV…LIAL), 103–123 (WLII…ALTP), 146–166 (AVMV…RFGA), 173–193 (FGPI…INSF), 218–238 (AGFF…ALYS), 252–272 (WPFV…WLLA), 292–312 (MVIY…QALI), 343–363 (LYIP…VLYF), 373–393 (YSLA…YFLI), 402–422 (IAII…ASLV), and 424–444 (FING…VMFI).

Belongs to the HAK/KUP transporter (TC 2.A.72) family.

Its subcellular location is the cell membrane. The catalysed reaction is K(+)(in) + H(+)(in) = K(+)(out) + H(+)(out). Functionally, transport of potassium into the cell. Likely operates as a K(+):H(+) symporter. This chain is Probable potassium transport system protein Kup 2, found in Lactococcus lactis subsp. lactis (strain IL1403) (Streptococcus lactis).